Consider the following 118-residue polypeptide: Large ribosomal subunit protein bL20 (118 aa).

The protein belongs to the bacterial ribosomal protein bL20 family.

Binds directly to 23S ribosomal RNA and is necessary for the in vitro assembly process of the 50S ribosomal subunit. It is not involved in the protein synthesizing functions of that subunit. The polypeptide is Large ribosomal subunit protein bL20 (Synechococcus sp. (strain JA-2-3B'a(2-13)) (Cyanobacteria bacterium Yellowstone B-Prime)).